Consider the following 104-residue polypeptide: Pyrimidine/purine nucleoside phosphorylase (104 aa).

The protein belongs to the nucleoside phosphorylase PpnP family.

It carries out the reaction a purine D-ribonucleoside + phosphate = a purine nucleobase + alpha-D-ribose 1-phosphate. It catalyses the reaction adenosine + phosphate = alpha-D-ribose 1-phosphate + adenine. The catalysed reaction is cytidine + phosphate = cytosine + alpha-D-ribose 1-phosphate. The enzyme catalyses guanosine + phosphate = alpha-D-ribose 1-phosphate + guanine. It carries out the reaction inosine + phosphate = alpha-D-ribose 1-phosphate + hypoxanthine. It catalyses the reaction thymidine + phosphate = 2-deoxy-alpha-D-ribose 1-phosphate + thymine. The catalysed reaction is uridine + phosphate = alpha-D-ribose 1-phosphate + uracil. The enzyme catalyses xanthosine + phosphate = alpha-D-ribose 1-phosphate + xanthine. Its function is as follows. Catalyzes the phosphorolysis of diverse nucleosides, yielding D-ribose 1-phosphate and the respective free bases. Can use uridine, adenosine, guanosine, cytidine, thymidine, inosine and xanthosine as substrates. Also catalyzes the reverse reactions. This is Pyrimidine/purine nucleoside phosphorylase from Janthinobacterium sp. (strain Marseille) (Minibacterium massiliensis).